The chain runs to 150 residues: 15 kDa calcium-binding protein (150 aa).

Residue A1 is modified to N-acetylalanine. EF-hand domains lie at 7-42 (TDAE…AGKS), 43-78 (FSEE…KMMK), 81-116 (WKKS…RIEP), and 118-150 (MSKE…IKSS). Positions 22, 24, 26, 28, 56, 58, 60, 62, 67, 94, 96, 98, 105, 131, 133, 135, 137, and 142 each coordinate Ca(2+).

The protein resides in the nucleus. The protein localises to the cytoplasm. It localises to the cytoskeleton. It is found in the spindle. In terms of biological role, may play an important role in mitosis of sea urchin egg. May function as a Ca(2+)-dependent intracellular modulator of microtubule assembly. The polypeptide is 15 kDa calcium-binding protein (Hemicentrotus pulcherrimus (Sea urchin)).